The chain runs to 151 residues: D-aminoacyl-tRNA deacylase (151 aa).

The Gly-cisPro motif, important for rejection of L-amino acids motif lies at 137 to 138 (GP).

The protein belongs to the DTD family. As to quaternary structure, homodimer.

Its subcellular location is the cytoplasm. The enzyme catalyses glycyl-tRNA(Ala) + H2O = tRNA(Ala) + glycine + H(+). It catalyses the reaction a D-aminoacyl-tRNA + H2O = a tRNA + a D-alpha-amino acid + H(+). An aminoacyl-tRNA editing enzyme that deacylates mischarged D-aminoacyl-tRNAs. Also deacylates mischarged glycyl-tRNA(Ala), protecting cells against glycine mischarging by AlaRS. Acts via tRNA-based rather than protein-based catalysis; rejects L-amino acids rather than detecting D-amino acids in the active site. By recycling D-aminoacyl-tRNA to D-amino acids and free tRNA molecules, this enzyme counteracts the toxicity associated with the formation of D-aminoacyl-tRNA entities in vivo and helps enforce protein L-homochirality. In Azoarcus sp. (strain BH72), this protein is D-aminoacyl-tRNA deacylase.